A 20-amino-acid polypeptide reads, in one-letter code: Ranalexin-1Ca (20 aa).

C14 and C20 form a disulfide bridge.

As to expression, expressed by the skin glands.

Its subcellular location is the secreted. In terms of biological role, antibacterial activity against Gram-positive bacterium S.aureus (MIC=17 uM) and Gram-negative bacterium E.coli (MIC=4 uM). Has activity against C.albicans (MIC=14 uM). The polypeptide is Ranalexin-1Ca (Lithobates clamitans (Green frog)).